Consider the following 355-residue polypeptide: F-box protein At1g31080 (355 aa).

In terms of domain architecture, F-box spans 4-49 (GANSASIPNDLILEILSRLPAKSTGRFRCVSKLWGSMLCHSYFTEL). The span at 306–320 (AGTSRSPPKQSTSTS) shows a compositional bias: polar residues. Residues 306 to 333 (AGTSRSPPKQSTSTSSREDHEVRTLAHQ) form a disordered region. A compositionally biased stretch (basic and acidic residues) spans 321 to 333 (SREDHEVRTLAHQ).

In Arabidopsis thaliana (Mouse-ear cress), this protein is F-box protein At1g31080.